Here is a 44-residue protein sequence, read N- to C-terminus: Cuticle protein CP463 (44 aa).

2 tandem repeats follow at residues 3–20 and 27–44.

In terms of tissue distribution, calcified shell.

This Cancer pagurus (Rock crab) protein is Cuticle protein CP463.